The primary structure comprises 425 residues: CinA-like protein (425 aa).

Belongs to the CinA family.

The polypeptide is CinA-like protein (Shewanella sp. (strain ANA-3)).